Consider the following 456-residue polypeptide: ATP synthase subunit beta 1 (456 aa).

ATP is bound at residue 152–159; that stretch reads GGAGVGKS.

Belongs to the ATPase alpha/beta chains family. As to quaternary structure, F-type ATPases have 2 components, CF(1) - the catalytic core - and CF(0) - the membrane proton channel. CF(1) has five subunits: alpha(3), beta(3), gamma(1), delta(1), epsilon(1). CF(0) has three main subunits: a(1), b(2) and c(9-12). The alpha and beta chains form an alternating ring which encloses part of the gamma chain. CF(1) is attached to CF(0) by a central stalk formed by the gamma and epsilon chains, while a peripheral stalk is formed by the delta and b chains.

It localises to the cell membrane. The enzyme catalyses ATP + H2O + 4 H(+)(in) = ADP + phosphate + 5 H(+)(out). Its function is as follows. Produces ATP from ADP in the presence of a proton gradient across the membrane. The catalytic sites are hosted primarily by the beta subunits. The sequence is that of ATP synthase subunit beta 1 from Listeria monocytogenes serovar 1/2a (strain ATCC BAA-679 / EGD-e).